The following is a 187-amino-acid chain: dTTP/UTP pyrophosphatase (187 aa).

The active-site Proton acceptor is the Asp65.

Belongs to the Maf family. YhdE subfamily. A divalent metal cation serves as cofactor.

The protein localises to the cytoplasm. It catalyses the reaction dTTP + H2O = dTMP + diphosphate + H(+). The enzyme catalyses UTP + H2O = UMP + diphosphate + H(+). In terms of biological role, nucleoside triphosphate pyrophosphatase that hydrolyzes dTTP and UTP. May have a dual role in cell division arrest and in preventing the incorporation of modified nucleotides into cellular nucleic acids. The polypeptide is dTTP/UTP pyrophosphatase (Pyrococcus abyssi (strain GE5 / Orsay)).